Consider the following 319-residue polypeptide: ATP-dependent 6-phosphofructokinase 1 (319 aa).

Residue G11 participates in ATP binding. 21-25 (RAVTR) contributes to the ADP binding site. Residues 72–73 (RC) and 102–105 (GDGS) each bind ATP. A Mg(2+)-binding site is contributed by D103. 125-127 (TID) contacts substrate. The active-site Proton acceptor is D127. R154 is an ADP binding site. Residues R162 and 169-171 (MGR) contribute to the substrate site. ADP is bound by residues 185–187 (GAE) and 213–215 (KTH). Residues E222, R243, and 249–252 (HIQR) each bind substrate.

Belongs to the phosphofructokinase type A (PFKA) family. ATP-dependent PFK group I subfamily. Prokaryotic clade 'B1' sub-subfamily. In terms of assembly, homotetramer. Requires Mg(2+) as cofactor.

It is found in the cytoplasm. The enzyme catalyses beta-D-fructose 6-phosphate + ATP = beta-D-fructose 1,6-bisphosphate + ADP + H(+). The protein operates within carbohydrate degradation; glycolysis; D-glyceraldehyde 3-phosphate and glycerone phosphate from D-glucose: step 3/4. With respect to regulation, allosterically activated by ADP and other diphosphonucleosides, and allosterically inhibited by phosphoenolpyruvate. Catalyzes the phosphorylation of D-fructose 6-phosphate to fructose 1,6-bisphosphate by ATP, the first committing step of glycolysis. This chain is ATP-dependent 6-phosphofructokinase 1, found in Clostridium perfringens (strain 13 / Type A).